Here is a 303-residue protein sequence, read N- to C-terminus: UDP-N-acetylenolpyruvoylglucosamine reductase (303 aa).

The region spanning 32–212 is the FAD-binding PCMH-type domain; it reads IGGKADLFLN…EQETKEYLAK (181 aa). Arg176 is a catalytic residue. The Proton donor role is filled by Ser226. The active site involves Glu296.

Belongs to the MurB family. The cofactor is FAD.

The protein localises to the cytoplasm. It carries out the reaction UDP-N-acetyl-alpha-D-muramate + NADP(+) = UDP-N-acetyl-3-O-(1-carboxyvinyl)-alpha-D-glucosamine + NADPH + H(+). It functions in the pathway cell wall biogenesis; peptidoglycan biosynthesis. Functionally, cell wall formation. In Desulforamulus reducens (strain ATCC BAA-1160 / DSM 100696 / MI-1) (Desulfotomaculum reducens), this protein is UDP-N-acetylenolpyruvoylglucosamine reductase.